The following is a 162-amino-acid chain: Cyanate hydratase (162 aa).

Residues arginine 90, glutamate 93, and serine 116 contribute to the active site.

It belongs to the cyanase family.

The catalysed reaction is cyanate + hydrogencarbonate + 3 H(+) = NH4(+) + 2 CO2. In terms of biological role, catalyzes the reaction of cyanate with bicarbonate to produce ammonia and carbon dioxide. This Populus trichocarpa (Western balsam poplar) protein is Cyanate hydratase.